A 122-amino-acid polypeptide reads, in one-letter code: Ribosome-binding factor A (122 aa).

Belongs to the RbfA family. Monomer. Binds 30S ribosomal subunits, but not 50S ribosomal subunits or 70S ribosomes.

Its subcellular location is the cytoplasm. One of several proteins that assist in the late maturation steps of the functional core of the 30S ribosomal subunit. Associates with free 30S ribosomal subunits (but not with 30S subunits that are part of 70S ribosomes or polysomes). Required for efficient processing of 16S rRNA. May interact with the 5'-terminal helix region of 16S rRNA. This Cupriavidus necator (strain ATCC 17699 / DSM 428 / KCTC 22496 / NCIMB 10442 / H16 / Stanier 337) (Ralstonia eutropha) protein is Ribosome-binding factor A.